A 370-amino-acid chain; its full sequence is Probable aspartic-type endopeptidase ARB_04018 (370 aa).

An N-terminal signal peptide occupies residues 1–21 (MWHSPFSTAFTLFLGFFTLTL). Residues N80 and N102 are each glycosylated (N-linked (GlcNAc...) asparagine). Residues 94–367 (FVNEITIGND…DHDGPKMGFA (274 aa)) enclose the Peptidase A1 domain. D110 is an active-site residue. N251 carries an N-linked (GlcNAc...) asparagine glycan. D261 is a catalytic residue. N298 carries N-linked (GlcNAc...) asparagine glycosylation.

It belongs to the peptidase A1 family.

It localises to the secreted. Its function is as follows. Probable aspartic-type endopeptidase which contributes to virulence. In Arthroderma benhamiae (strain ATCC MYA-4681 / CBS 112371) (Trichophyton mentagrophytes), this protein is Probable aspartic-type endopeptidase ARB_04018.